Reading from the N-terminus, the 511-residue chain is Caspase-8 (511 aa).

Positions 1 to 242 are excised as a propeptide; it reads MSGHNILTQL…MDGNGIANES (242 aa). Catalysis depends on residues histidine 352 and cysteine 393. A propeptide spanning residues 406 to 415 is cleaved from the precursor; the sequence is KINASTKSPC.

It belongs to the peptidase C14A family. Heterotetramer that consists of two anti-parallel arranged heterodimers, each one formed by a 15 kDa (caspase-8 subunit p15) and a 10 kDa (caspase-8 subunit p10) subunit. Interacts with the N-terminus of Fadd.

It is found in the cytoplasm. It carries out the reaction Strict requirement for Asp at position P1 and has a preferred cleavage sequence of (Leu/Asp/Val)-Glu-Thr-Asp-|-(Gly/Ser/Ala).. Functionally, effector of the programmed cell death (PCD) activators rpr, grim and W. May play an apoptotic role in the germline as well as soma. Role in immune response, required to resist Gram-negative bacterial infections by regulating DptA. Fadd interacts with Dredd, Fadd promotes cleavage of Dredd and is necessary and sufficient for enhancing Dredd-induced apoptosis. This chain is Caspase-8, found in Drosophila pseudoobscura pseudoobscura (Fruit fly).